Consider the following 105-residue polypeptide: Nucleoid-associated protein ABO_1774 (105 aa).

The segment at 85–105 (QQQDSMQNMAGGFPFPPGFKP) is disordered.

It belongs to the YbaB/EbfC family. In terms of assembly, homodimer.

It localises to the cytoplasm. The protein localises to the nucleoid. Functionally, binds to DNA and alters its conformation. May be involved in regulation of gene expression, nucleoid organization and DNA protection. In Alcanivorax borkumensis (strain ATCC 700651 / DSM 11573 / NCIMB 13689 / SK2), this protein is Nucleoid-associated protein ABO_1774.